The sequence spans 191 residues: Protein GrpE (191 aa).

This sequence belongs to the GrpE family. Homodimer.

The protein resides in the cytoplasm. Functionally, participates actively in the response to hyperosmotic and heat shock by preventing the aggregation of stress-denatured proteins, in association with DnaK and GrpE. It is the nucleotide exchange factor for DnaK and may function as a thermosensor. Unfolded proteins bind initially to DnaJ; upon interaction with the DnaJ-bound protein, DnaK hydrolyzes its bound ATP, resulting in the formation of a stable complex. GrpE releases ADP from DnaK; ATP binding to DnaK triggers the release of the substrate protein, thus completing the reaction cycle. Several rounds of ATP-dependent interactions between DnaJ, DnaK and GrpE are required for fully efficient folding. This chain is Protein GrpE, found in Helicobacter pylori (strain P12).